Consider the following 570-residue polypeptide: Sulfite reductase [NADPH] hemoprotein beta-component (570 aa).

[4Fe-4S] cluster contacts are provided by cysteine 434, cysteine 440, cysteine 479, and cysteine 483. Cysteine 483 serves as a coordination point for siroheme.

The protein belongs to the nitrite and sulfite reductase 4Fe-4S domain family. As to quaternary structure, alpha(8)-beta(8). The alpha component is a flavoprotein, the beta component is a hemoprotein. Requires siroheme as cofactor. It depends on [4Fe-4S] cluster as a cofactor.

It carries out the reaction hydrogen sulfide + 3 NADP(+) + 3 H2O = sulfite + 3 NADPH + 4 H(+). Its pathway is sulfur metabolism; hydrogen sulfide biosynthesis; hydrogen sulfide from sulfite (NADPH route): step 1/1. In terms of biological role, component of the sulfite reductase complex that catalyzes the 6-electron reduction of sulfite to sulfide. This is one of several activities required for the biosynthesis of L-cysteine from sulfate. The sequence is that of Sulfite reductase [NADPH] hemoprotein beta-component from Escherichia coli (strain B / BL21-DE3).